The following is a 1296-amino-acid chain: ABC transporter B family member 21 (1296 aa).

The disordered stretch occupies residues 1–59 (MDSVIESEEGLKVDSPNRADAETSNSKIHEEDEKELKTESDLKEEKKKTEKNKQEEDEK). The segment covering 9 to 59 (EGLKVDSPNRADAETSNSKIHEEDEKELKTESDLKEEKKKTEKNKQEEDEK) has biased composition (basic and acidic residues). Residues 77–97 (IILMILGTIGAVGNGLGFPIM) form a helical membrane-spanning segment. Positions 80–368 (MILGTIGAVG…ASPCLSAFAA (289 aa)) constitute an ABC transmembrane type-1 1 domain. N-linked (GlcNAc...) asparagine glycosylation is present at asparagine 113. The next 5 helical transmembrane spans lie at 128–148 (FVYL…GWMI), 205–225 (IQLV…GWLL), 227–247 (LVMV…AIVI), 307–327 (GLGL…AVWY), and 336–356 (GYTG…SMSL). The ABC transporter 1 domain maps to 403–639 (IELNNVNFSY…PEGAYSQLIR (237 aa)). A glycan (N-linked (GlcNAc...) asparagine) is linked at asparagine 409. 438 to 445 (GQSGSGKS) is an ATP binding site. Asparagine 505, asparagine 519, and asparagine 590 each carry an N-linked (GlcNAc...) asparagine glycan. Over residues 640-662 (LQEDTKQTEDSTDEQKLSMESMK) the composition is skewed to basic and acidic residues. The disordered stretch occupies residues 640 to 672 (LQEDTKQTEDSTDEQKLSMESMKRSSLRKSSLS). Serine 657 and serine 660 each carry phosphoserine. The region spanning 730 to 1017 (LILGSIAAVL…SSSLSPDSSK (288 aa)) is the ABC transmembrane type-1 2 domain. 2 consecutive transmembrane segments (helical) span residues 731–751 (ILGS…GILI) and 774–794 (IIFM…TIFF). A glycan (N-linked (GlcNAc...) asparagine) is linked at asparagine 826. The next 3 membrane-spanning stretches (helical) occupy residues 865-885 (VIAF…LPLI), 952-972 (GIVS…SYAA), and 986-1006 (TTFD…VAIS). The ABC transporter 2 domain maps to 1052–1289 (IELRHISFKY…KDGVYASLVQ (238 aa)). Residue 1087 to 1094 (GESGSGKS) coordinates ATP. 2 N-linked (GlcNAc...) asparagine glycosylation sites follow: asparagine 1141 and asparagine 1240.

It belongs to the ABC transporter superfamily. ABCB family. Multidrug resistance exporter (TC 3.A.1.201) subfamily.

The protein localises to the membrane. The chain is ABC transporter B family member 21 (ABCB21) from Arabidopsis thaliana (Mouse-ear cress).